Consider the following 435-residue polypeptide: Methylenetetrahydrofolate--tRNA-(uracil-5-)-methyltransferase TrmFO (435 aa).

FAD is bound at residue 9–14 (GAGLAG).

It belongs to the MnmG family. TrmFO subfamily. Requires FAD as cofactor.

It is found in the cytoplasm. It catalyses the reaction uridine(54) in tRNA + (6R)-5,10-methylene-5,6,7,8-tetrahydrofolate + NADH + H(+) = 5-methyluridine(54) in tRNA + (6S)-5,6,7,8-tetrahydrofolate + NAD(+). The enzyme catalyses uridine(54) in tRNA + (6R)-5,10-methylene-5,6,7,8-tetrahydrofolate + NADPH + H(+) = 5-methyluridine(54) in tRNA + (6S)-5,6,7,8-tetrahydrofolate + NADP(+). Functionally, catalyzes the folate-dependent formation of 5-methyl-uridine at position 54 (M-5-U54) in all tRNAs. This chain is Methylenetetrahydrofolate--tRNA-(uracil-5-)-methyltransferase TrmFO, found in Staphylococcus aureus (strain JH1).